Here is a 396-residue protein sequence, read N- to C-terminus: Elongation factor Tu (396 aa).

The region spanning 10-206 is the tr-type G domain; sequence KPHVNVGTIG…ALDTYIPTPE (197 aa). A G1 region spans residues 19-26; that stretch reads GHVDHGKT. A GTP-binding site is contributed by 19-26; the sequence is GHVDHGKT. T26 is a Mg(2+) binding site. Residues 60–64 form a G2 region; the sequence is GITIN. Positions 81–84 are G3; the sequence is DCPG. GTP-binding positions include 81–85 and 136–139; these read DCPGH and NKCD. The G4 stretch occupies residues 136–139; that stretch reads NKCD. A G5 region spans residues 174-176; that stretch reads SAK.

This sequence belongs to the TRAFAC class translation factor GTPase superfamily. Classic translation factor GTPase family. EF-Tu/EF-1A subfamily. As to quaternary structure, monomer.

It localises to the cytoplasm. It carries out the reaction GTP + H2O = GDP + phosphate + H(+). In terms of biological role, GTP hydrolase that promotes the GTP-dependent binding of aminoacyl-tRNA to the A-site of ribosomes during protein biosynthesis. The polypeptide is Elongation factor Tu (Polynucleobacter asymbioticus (strain DSM 18221 / CIP 109841 / QLW-P1DMWA-1) (Polynucleobacter necessarius subsp. asymbioticus)).